A 309-amino-acid polypeptide reads, in one-letter code: Probable WRKY transcription factor 26 (309 aa).

Positions 1 to 24 are disordered; that stretch reads MGSFDRQRAVPKFKTATPSPLPLS. The WRKY 1 DNA-binding region spans 111 to 176; sequence SSNKTSDDGY…YKGSHNHPKP (66 aa). Residues C142, C147, H171, and H173 each contribute to the Zn(2+) site. The disordered stretch occupies residues 167-210; that stretch reads YKGSHNHPKPQSTKRSSSTAIAAHQNSSNGDGKDIGEDETEAKR. Polar residues predominate over residues 175–196; sequence KPQSTKRSSSTAIAAHQNSSNG. A compositionally biased stretch (basic and acidic residues) spans 197-210; the sequence is DGKDIGEDETEAKR. The segment at residues 228–293 is a DNA-binding region (WRKY 2); sequence SDIDILDDGY…YEGKHKHQIP (66 aa). C259, C264, H288, and H290 together coordinate Zn(2+).

It belongs to the WRKY group I family. In terms of assembly, interacts with VQ10.

The protein resides in the nucleus. Functionally, transcription factor. Interacts specifically with the W box (5'-(T)TGAC[CT]-3'), a frequently occurring elicitor-responsive cis-acting element. Functions with WRKY25 and WRKY33 as positive regulator of plant thermotolerance by partially participating in ethylene-response signal transduction pathway. In Arabidopsis thaliana (Mouse-ear cress), this protein is Probable WRKY transcription factor 26 (WRKY26).